The following is a 444-amino-acid chain: MDSGMRATCTVPEHFLPRKLSKQNLDRFIPNRSAKDFDFANYALTQGSKRNLDEVTSASRKAYMTQLAVVMNQNRTRILAFRNKPKSLLSTNHSDSPHQNPKPVKPRRYIPQNSERVLDAPGLRDDFSLNLLDWGSANVLAIALGDTVYLWDASSGSTSELVTIDEDKGPVTSINWTQDGLDLAVGLDNSEVQLWDCVSNRQVRTLRGGHESRVGSLAWDNHILTTGGMDGKIVNNDVRIRSSIVETYLGHTEEVCGLKWSESGNKQASGGNDNVVHIWDRSLASSKQTRQWLHRFEEHTAAVRALAWCPFQASLLATGGGVGDGKIKFWNTHTGACLNSVETGSQVCSLLWSQSERELLSSHGFTQNQLTLWKYPSMSKMAELNGHTSRVLFMAQSPNGCTVASAAGDENLRLWNVFGEPPKTTKKAASKKYPELFSHVNSLR.

A compositionally biased stretch (polar residues) spans 88 to 99 (LLSTNHSDSPHQ). A disordered region spans residues 88–108 (LLSTNHSDSPHQNPKPVKPRR). 7 WD repeats span residues 124–161 (RDDFSLNLLDWGSANVLAIALGDTVYLWDASSGSTSEL), 166–205 (EDKGPVTSINWTQDGLDLAVGLDNSEVQLWDCVSNRQVRT), 209–246 (GHESRVGSLAWDNHILTTGGMDGKIVNNDVRIRSSIVE), 250–289 (GHTEEVCGLKWSESGNKQASGGNDNVVHIWDRSLASSKQT), 298–340 (EHTA…CLNS), 342–383 (ETGS…KMAE), and 386–425 (GHTSRVLFMAQSPNGCTVASAAGDENLRLWNVFGEPPKTT).

Belongs to the WD repeat CDC20/Fizzy family. As to quaternary structure, the APC/C is composed of at least 11 subunits that stay tightly associated throughout the cell cycle.

Its subcellular location is the cytoplasm. The protein operates within protein modification; protein ubiquitination. Component of the anaphase promoting complex/cyclosome (APC/C), a cell cycle-regulated E3 ubiquitin-protein ligase complex that controls progression through mitosis and the G1 phase of the cell cycle. The polypeptide is Cell division cycle 20.4, cofactor of APC complex (CDC20-4) (Arabidopsis thaliana (Mouse-ear cress)).